A 266-amino-acid polypeptide reads, in one-letter code: Ribosomal RNA small subunit methyltransferase A (266 aa).

Residues Asn16, Leu18, Gly43, Glu64, Asp89, and Asn110 each contribute to the S-adenosyl-L-methionine site.

Belongs to the class I-like SAM-binding methyltransferase superfamily. rRNA adenine N(6)-methyltransferase family. RsmA subfamily.

The protein resides in the cytoplasm. The catalysed reaction is adenosine(1518)/adenosine(1519) in 16S rRNA + 4 S-adenosyl-L-methionine = N(6)-dimethyladenosine(1518)/N(6)-dimethyladenosine(1519) in 16S rRNA + 4 S-adenosyl-L-homocysteine + 4 H(+). Its function is as follows. Specifically dimethylates two adjacent adenosines (A1518 and A1519) in the loop of a conserved hairpin near the 3'-end of 16S rRNA in the 30S particle. May play a critical role in biogenesis of 30S subunits. This Marinomonas sp. (strain MWYL1) protein is Ribosomal RNA small subunit methyltransferase A.